Reading from the N-terminus, the 82-residue chain is Consomatin Ro2 (82 aa).

Positions 1-22 are cleaved as a signal peptide; the sequence is MQTAYWLMVMMMVWITAPLYEG. Residues 23 to 57 constitute a propeptide that is removed on maturation; the sequence is GKPNDVIRGLVPDDLTPQFILRSLISRRRSDKDVR. A disulfide bond links C62 and C68. W64 is subject to D-tryptophan. 4-hydroxyproline is present on residues P69 and P70. Positions 72 to 82 are excised as a propeptide; that stretch reads LWRRHDRKGKD.

The protein belongs to the conotoxin C superfamily. Consomatin family. Expressed by the venom duct.

Its subcellular location is the secreted. Moderately activates human somatostatin receptors (SSTR) with a preferential activation of SSTR1 and SSTR4. In vivo, does not cause behavioral changes in mice within a few minutes of intracranial injection, but causes a progressive loss of movement thereafter. Four to five hours after injection, mice recover, even with the highest dose tested. Shows antinociception and antihyperalgesia activities in two mouse models of acute pain, most probably by acting outside the central nervous system. This is Consomatin Ro2 from Conus rolani (Cone snail).